The following is a 46-amino-acid chain: Ligatoxin-B (46 aa).

3 disulfide bridges follow: cysteine 3–cysteine 40, cysteine 4–cysteine 32, and cysteine 16–cysteine 26.

The protein belongs to the plant thionin (TC 1.C.44) family.

The protein resides in the secreted. Its function is as follows. Thionins are small plant proteins which are toxic to animal cells. They seem to exert their toxic effect at the level of the cell membrane. Their precise function is not known. The polypeptide is Ligatoxin-B (Phoradendron liga (Argentine mistletoe)).